Reading from the N-terminus, the 93-residue chain is MARSLKKGPFVADHLLKKIEFLNVKKEKKVITTWSRGSTILPIMIGHTIAVHNGREHLPIFITDQMVGHKLGEFSPTRTFRGHTKSDKKSRRP.

Residues 73–93 (EFSPTRTFRGHTKSDKKSRRP) are disordered. Residues 80–93 (FRGHTKSDKKSRRP) are compositionally biased toward basic residues.

It belongs to the universal ribosomal protein uS19 family.

The protein localises to the plastid. Its subcellular location is the chloroplast. Functionally, protein S19 forms a complex with S13 that binds strongly to the 16S ribosomal RNA. In Mesostigma viride (Green alga), this protein is Small ribosomal subunit protein uS19c (rps19).